Here is a 449-residue protein sequence, read N- to C-terminus: Glutamyl-tRNA reductase (449 aa).

Substrate-binding positions include 58–61, Ser121, 126–128, and Gln132; these read TCNR and ETQ. The active-site Nucleophile is the Cys59. 203 to 208 contributes to the NADP(+) binding site; the sequence is GLGEMA.

The protein belongs to the glutamyl-tRNA reductase family. As to quaternary structure, homodimer.

The enzyme catalyses (S)-4-amino-5-oxopentanoate + tRNA(Glu) + NADP(+) = L-glutamyl-tRNA(Glu) + NADPH + H(+). The protein operates within porphyrin-containing compound metabolism; protoporphyrin-IX biosynthesis; 5-aminolevulinate from L-glutamyl-tRNA(Glu): step 1/2. In terms of biological role, catalyzes the NADPH-dependent reduction of glutamyl-tRNA(Glu) to glutamate 1-semialdehyde (GSA). This Helicobacter pylori (strain Shi470) protein is Glutamyl-tRNA reductase.